The following is a 201-amino-acid chain: Protein FAR-RED-ELONGATED HYPOCOTYL 1-LIKE (201 aa).

A Nuclear localization sequence (NLS) motif is present at residues 32-35; it reads KKRK. The Nuclear export sequence (NES) motif lies at 43–46; the sequence is LLPL.

This sequence belongs to the FHY1 protein family. As to quaternary structure, homodimer and heterodimer with FHY1. Interacts with PHYA, especially upon far-red (FR) light illumination. Binds to LAF1 and HFR1. In terms of processing, inactivated by rapid reversible PHYA-mediated phosphorylation.

The protein localises to the nucleus. It localises to the cytoplasm. Its function is as follows. Can activate transcription. Essential for light-regulated PHYA nuclear accumulation and subsequent PHYA phototropic signaling processes. PHYA-specific signal transducer in response to continuous FR lights. Mediates the association of PHYA with HFR1 and LAF1 in the nucleus in response to FR conditions. Contributes to inhibition of hypocotyl elongation in continuous blue light (B). In Arabidopsis thaliana (Mouse-ear cress), this protein is Protein FAR-RED-ELONGATED HYPOCOTYL 1-LIKE.